The sequence spans 264 residues: 3'-5' ssDNA/RNA exonuclease TatD (264 aa).

A divalent metal cation-binding residues include E92, H128, and H153.

Belongs to the metallo-dependent hydrolases superfamily. TatD-type hydrolase family. TatD subfamily. As to quaternary structure, monomer. The cofactor is Mg(2+).

It is found in the cytoplasm. In terms of biological role, 3'-5' exonuclease that prefers single-stranded DNA and RNA. May play a role in the H(2)O(2)-induced DNA damage repair. This chain is 3'-5' ssDNA/RNA exonuclease TatD, found in Musicola paradisiaca (strain Ech703) (Dickeya paradisiaca).